Reading from the N-terminus, the 284-residue chain is Shikimate kinase (284 aa).

85–95 (PLAAGLKSSSA) is an ATP binding site.

The protein belongs to the GHMP kinase family. Archaeal shikimate kinase subfamily.

The protein localises to the cytoplasm. The catalysed reaction is shikimate + ATP = 3-phosphoshikimate + ADP + H(+). It participates in metabolic intermediate biosynthesis; chorismate biosynthesis; chorismate from D-erythrose 4-phosphate and phosphoenolpyruvate: step 5/7. This is Shikimate kinase from Halobacterium salinarum (strain ATCC 29341 / DSM 671 / R1).